The following is a 142-amino-acid chain: Coiled-coil-helix-coiled-coil-helix domain-containing protein 10, mitochondrial (142 aa).

The transit peptide at 1–16 directs the protein to the mitochondrion; that stretch reads MPRGSRSAASRPASRP. A compositionally biased stretch (low complexity) spans 1–20; sequence MPRGSRSAASRPASRPAAPS. Disordered regions lie at residues 1–45 and 68–97; these read MPRG…PGLM and ALTG…PQPL. A compositionally biased stretch (pro residues) spans 21-39; the sequence is AHPPAHPPPSAAAPAPAPS. The span at 80 to 90 shows a compositional bias: low complexity; that stretch reads PSQPAVQQAPT. Residues 99 to 140 enclose the CHCH domain; sequence MGPCAYEIRQFLDCSTTQSDLSLCEGFSEALKQCKYYHGLSS. 2 consecutive short sequence motifs (cx9C motif) follow at residues 102-112 and 122-132; these read CAYEIRQFLDC and CEGFSEALKQC. Cystine bridges form between Cys-102-Cys-132 and Cys-112-Cys-122.

Ubiquitously expressed. Higher expression is observed in heart and liver.

The protein localises to the mitochondrion intermembrane space. Functionally, may be involved in the maintenance of mitochondrial organization and mitochondrial cristae structure. This Homo sapiens (Human) protein is Coiled-coil-helix-coiled-coil-helix domain-containing protein 10, mitochondrial (CHCHD10).